The following is a 260-amino-acid chain: 3'-5' ssDNA/RNA exonuclease TatD (260 aa).

Residues glutamate 91, histidine 127, and histidine 152 each contribute to the a divalent metal cation site.

It belongs to the metallo-dependent hydrolases superfamily. TatD-type hydrolase family. TatD subfamily. In terms of assembly, monomer. It depends on Mg(2+) as a cofactor.

It is found in the cytoplasm. Its function is as follows. 3'-5' exonuclease that prefers single-stranded DNA and RNA. May play a role in the H(2)O(2)-induced DNA damage repair. The protein is 3'-5' ssDNA/RNA exonuclease TatD of Enterobacter lignolyticus (strain SCF1).